We begin with the raw amino-acid sequence, 259 residues long: Global transcriptional regulator CodY (259 aa).

The segment at 1 to 155 is GAF domain; that stretch reads MSLLSRMRKI…GATVVGMEIL (155 aa). The segment at residues 203-222 is a DNA-binding region (H-T-H motif); sequence ASKIADRVGITRSVIVNALR. The residue at position 215 (Ser215) is a Phosphoserine.

Belongs to the CodY family.

Its subcellular location is the cytoplasm. DNA-binding global transcriptional regulator which is involved in the adaptive response to starvation and acts by directly or indirectly controlling the expression of numerous genes in response to nutrient availability. During rapid exponential growth, CodY is highly active and represses genes whose products allow adaptation to nutrient depletion. The chain is Global transcriptional regulator CodY from Halalkalibacterium halodurans (strain ATCC BAA-125 / DSM 18197 / FERM 7344 / JCM 9153 / C-125) (Bacillus halodurans).